Consider the following 355-residue polypeptide: Glycerol-3-phosphate dehydrogenase [NAD(P)+] (355 aa).

4 residues coordinate NADPH: S14, W15, R35, and K117. Sn-glycerol 3-phosphate-binding residues include K117, G147, and S149. Position 151 (A151) interacts with NADPH. Sn-glycerol 3-phosphate-binding residues include K202, D255, S265, R266, and N267. Residue K202 is the Proton acceptor of the active site. R266 provides a ligand contact to NADPH. NADPH-binding residues include I290 and E292.

This sequence belongs to the NAD-dependent glycerol-3-phosphate dehydrogenase family.

The protein localises to the cytoplasm. It carries out the reaction sn-glycerol 3-phosphate + NAD(+) = dihydroxyacetone phosphate + NADH + H(+). The catalysed reaction is sn-glycerol 3-phosphate + NADP(+) = dihydroxyacetone phosphate + NADPH + H(+). It functions in the pathway membrane lipid metabolism; glycerophospholipid metabolism. Catalyzes the reduction of the glycolytic intermediate dihydroxyacetone phosphate (DHAP) to sn-glycerol 3-phosphate (G3P), the key precursor for phospholipid synthesis. The protein is Glycerol-3-phosphate dehydrogenase [NAD(P)+] of Lawsonia intracellularis (strain PHE/MN1-00).